A 331-amino-acid chain; its full sequence is Glutamyl-Q tRNA(Asp) synthetase (331 aa).

A compositionally biased stretch (polar residues) spans 1 to 30 (MVQQAVIQRSANQQLSNQRSANQRATNQPT). The segment at 1–36 (MVQQAVIQRSANQQLSNQRSANQRATNQPTEYVGRF) is disordered. Residues 35-39 (RFAPS) and Glu-71 contribute to the L-glutamate site. The 'HIGH' region signature appears at 38–48 (PSPSGDLHFGS). Zn(2+) is bound by residues Cys-127, Cys-129, Tyr-141, and Cys-145. Residues Tyr-198 and Arg-216 each contribute to the L-glutamate site. The 'KMSKS' region signature appears at 254-258 (KLSKQ). Lys-257 serves as a coordination point for ATP.

Belongs to the class-I aminoacyl-tRNA synthetase family. GluQ subfamily. Zn(2+) is required as a cofactor.

Its function is as follows. Catalyzes the tRNA-independent activation of glutamate in presence of ATP and the subsequent transfer of glutamate onto a tRNA(Asp). Glutamate is transferred on the 2-amino-5-(4,5-dihydroxy-2-cyclopenten-1-yl) moiety of the queuosine in the wobble position of the QUC anticodon. The polypeptide is Glutamyl-Q tRNA(Asp) synthetase (Yersinia pseudotuberculosis serotype I (strain IP32953)).